Here is a 528-residue protein sequence, read N- to C-terminus: Probable protein phosphatase 2C 51 (528 aa).

A helical transmembrane segment spans residues 8 to 28; the sequence is SLLNLGLLIIFFVFFFLVINC. The 375-residue stretch at 71 to 445 folds into the PPM-type phosphatase domain; that stretch reads RCHTAAIQGR…DNMAAVVVPL (375 aa). D117, G118, D385, and D436 together coordinate Mn(2+).

It belongs to the PP2C family. It depends on Mg(2+) as a cofactor. The cofactor is Mn(2+).

Its subcellular location is the membrane. It carries out the reaction O-phospho-L-seryl-[protein] + H2O = L-seryl-[protein] + phosphate. The enzyme catalyses O-phospho-L-threonyl-[protein] + H2O = L-threonyl-[protein] + phosphate. The sequence is that of Probable protein phosphatase 2C 51 from Arabidopsis thaliana (Mouse-ear cress).